Consider the following 558-residue polypeptide: Alkaline/neutral invertase CINV2 (558 aa).

Residues S16, S19, and S50 each carry the phosphoserine modification. T79 is subject to Phosphothreonine. Phosphoserine is present on S555.

It belongs to the glycosyl hydrolase 100 family.

The protein localises to the cytoplasm. The protein resides in the cytosol. It carries out the reaction Hydrolysis of terminal non-reducing beta-D-fructofuranoside residues in beta-D-fructofuranosides.. In terms of biological role, cytosolic invertase that may cleave sucrose into glucose and fructose, and that is involved in the regulation of root growth. May regulate sugar-mediated root development by controlling sucrose catabolism in root cells. This is Alkaline/neutral invertase CINV2 from Arabidopsis thaliana (Mouse-ear cress).